We begin with the raw amino-acid sequence, 532 residues long: Bifunctional purine biosynthesis protein PurH (532 aa).

In terms of domain architecture, MGS-like spans 1 to 147; that stretch reads MAKIKRALIS…KNYRSVTVVT (147 aa).

Belongs to the PurH family.

It carries out the reaction (6R)-10-formyltetrahydrofolate + 5-amino-1-(5-phospho-beta-D-ribosyl)imidazole-4-carboxamide = 5-formamido-1-(5-phospho-D-ribosyl)imidazole-4-carboxamide + (6S)-5,6,7,8-tetrahydrofolate. The catalysed reaction is IMP + H2O = 5-formamido-1-(5-phospho-D-ribosyl)imidazole-4-carboxamide. The protein operates within purine metabolism; IMP biosynthesis via de novo pathway; 5-formamido-1-(5-phospho-D-ribosyl)imidazole-4-carboxamide from 5-amino-1-(5-phospho-D-ribosyl)imidazole-4-carboxamide (10-formyl THF route): step 1/1. It functions in the pathway purine metabolism; IMP biosynthesis via de novo pathway; IMP from 5-formamido-1-(5-phospho-D-ribosyl)imidazole-4-carboxamide: step 1/1. This is Bifunctional purine biosynthesis protein PurH from Magnetococcus marinus (strain ATCC BAA-1437 / JCM 17883 / MC-1).